The following is a 638-amino-acid chain: NBPF family member NBPF4 (638 aa).

2 coiled-coil regions span residues 10 to 43 (SERA…EKFL) and 69 to 115 (DSVL…KLRE). Residues 157-285 (HLVHKLSPEN…VPPRHHDKSN (129 aa)) form a disordered region. Acidic residues predominate over residues 165–179 (ENDEDEDEDEDDKDE). One can recognise an Olduvai 1 domain in the interval 174-261 (EDDKDEEVEK…EEEEALNIPP (88 aa)). A compositionally biased stretch (basic and acidic residues) spans 192–202 (EVQKTEEKEVP). Low complexity predominate over residues 214-226 (SNSHNPSNSNQPH). 2 stretches are compositionally biased toward basic and acidic residues: residues 232 to 251 (TFKE…HPHD) and 264 to 273 (QNDHEEEEGK). Olduvai domains follow at residues 326–399 (EKQS…ALVD) and 400–503 (KIKK…SQAQ). Residues 562 to 584 (GMKNPPQLEDDALEGSASNTQGR) are disordered.

The protein belongs to the NBPF family. In terms of tissue distribution, expressed in testis.

It is found in the cytoplasm. This Homo sapiens (Human) protein is NBPF family member NBPF4.